The chain runs to 747 residues: Eukaryotic translation initiation factor 3 subunit B (747 aa).

The RRM domain maps to 42–128 (AFVVVDGLPE…HTLRVNKLTD (87 aa)). WD repeat units follow at residues 195 to 234 (DRQH…RQRR), 236 to 292 (AHPF…PLRS), 310 to 349 (APKF…LLDK), 520 to 563 (LEKK…EKPE), and 578 to 623 (ADHY…LREE).

The protein belongs to the eIF-3 subunit B family. As to quaternary structure, component of the eukaryotic translation initiation factor 3 (eIF-3) complex.

It is found in the cytoplasm. RNA-binding component of the eukaryotic translation initiation factor 3 (eIF-3) complex, which is involved in protein synthesis of a specialized repertoire of mRNAs and, together with other initiation factors, stimulates binding of mRNA and methionyl-tRNAi to the 40S ribosome. The eIF-3 complex specifically targets and initiates translation of a subset of mRNAs involved in cell proliferation. The polypeptide is Eukaryotic translation initiation factor 3 subunit B (prt-1) (Neurospora crassa (strain ATCC 24698 / 74-OR23-1A / CBS 708.71 / DSM 1257 / FGSC 987)).